The primary structure comprises 206 residues: Holliday junction branch migration complex subunit RuvA (206 aa).

Residues 1-64 (MIGKLKGTLD…EDMLRLYGFQ (64 aa)) form a domain I region. The domain II stretch occupies residues 65–144 (SALEREWFRL…AYAGAASGTI (80 aa)). Residues 145–154 (GLKQELGEGV) form a flexible linker region. Positions 154–206 (VAPAPITDAVSALVNLGYSRDTAANAVAAALKTAGEDADASKLIRFGLKELAR) are domain III.

It belongs to the RuvA family. Homotetramer. Forms an RuvA(8)-RuvB(12)-Holliday junction (HJ) complex. HJ DNA is sandwiched between 2 RuvA tetramers; dsDNA enters through RuvA and exits via RuvB. An RuvB hexamer assembles on each DNA strand where it exits the tetramer. Each RuvB hexamer is contacted by two RuvA subunits (via domain III) on 2 adjacent RuvB subunits; this complex drives branch migration. In the full resolvosome a probable DNA-RuvA(4)-RuvB(12)-RuvC(2) complex forms which resolves the HJ.

It is found in the cytoplasm. In terms of biological role, the RuvA-RuvB-RuvC complex processes Holliday junction (HJ) DNA during genetic recombination and DNA repair, while the RuvA-RuvB complex plays an important role in the rescue of blocked DNA replication forks via replication fork reversal (RFR). RuvA specifically binds to HJ cruciform DNA, conferring on it an open structure. The RuvB hexamer acts as an ATP-dependent pump, pulling dsDNA into and through the RuvAB complex. HJ branch migration allows RuvC to scan DNA until it finds its consensus sequence, where it cleaves and resolves the cruciform DNA. This Mesorhizobium japonicum (strain LMG 29417 / CECT 9101 / MAFF 303099) (Mesorhizobium loti (strain MAFF 303099)) protein is Holliday junction branch migration complex subunit RuvA.